Here is a 471-residue protein sequence, read N- to C-terminus: tRNA-2-methylthio-N(6)-dimethylallyladenosine synthase (471 aa).

Residues Lys-36–Thr-154 enclose the MTTase N-terminal domain. [4Fe-4S] cluster is bound by residues Cys-45, Cys-81, Cys-115, Cys-191, Cys-195, and Cys-198. The 231-residue stretch at Arg-177–Lys-407 folds into the Radical SAM core domain. The 62-residue stretch at Gln-410–Ile-471 folds into the TRAM domain.

It belongs to the methylthiotransferase family. MiaB subfamily. As to quaternary structure, monomer. The cofactor is [4Fe-4S] cluster.

It is found in the cytoplasm. It carries out the reaction N(6)-dimethylallyladenosine(37) in tRNA + (sulfur carrier)-SH + AH2 + 2 S-adenosyl-L-methionine = 2-methylsulfanyl-N(6)-dimethylallyladenosine(37) in tRNA + (sulfur carrier)-H + 5'-deoxyadenosine + L-methionine + A + S-adenosyl-L-homocysteine + 2 H(+). Functionally, catalyzes the methylthiolation of N6-(dimethylallyl)adenosine (i(6)A), leading to the formation of 2-methylthio-N6-(dimethylallyl)adenosine (ms(2)i(6)A) at position 37 in tRNAs that read codons beginning with uridine. The protein is tRNA-2-methylthio-N(6)-dimethylallyladenosine synthase of Caldicellulosiruptor saccharolyticus (strain ATCC 43494 / DSM 8903 / Tp8T 6331).